Here is a 264-residue protein sequence, read N- to C-terminus: MICOS complex subunit MIC27 (264 aa).

The transit peptide at 1–27 (MAALRMGKLTTMPTGLIYASISVHVAK) directs the protein to the mitochondrion. Topologically, residues 28-110 (EEESKKQLVK…YVYLKNPPRD (83 aa)) are mitochondrial intermembrane. The chain crosses the membrane as a helical span at residues 111–129 (FLPKIGVITVSGLAGFISA). Over 130–137 (RKGSRFKR) the chain is Mitochondrial matrix. A helical transmembrane segment spans residues 138 to 155 (IAYPLGLATLGATVCYPV). Residues 156-264 (QSVIIAKVAG…EDIDMYSTRS (109 aa)) lie on the Mitochondrial intermembrane side of the membrane. Basic and acidic residues predominate over residues 189–198 (KLPEHKEKTK). The segment at 189 to 264 (KLPEHKEKTK…EDIDMYSTRS (76 aa)) is disordered. Positions 223–238 (AELSSETKTKSTSGAT) are enriched in low complexity. Residues 245–256 (KLMDHGQSHPED) are compositionally biased toward basic and acidic residues.

Belongs to the apolipoprotein O/MICOS complex subunit Mic27 family. As to quaternary structure, component of the mitochondrial contact site and cristae organizing system (MICOS) complex, composed of at least MICOS10/MIC10, CHCHD3/MIC19, CHCHD6/MIC25, APOOL/MIC27, IMMT/MIC60, APOO/MIC23/MIC26 and QIL1/MIC13. This complex was also known under the names MINOS or MitOS complex. The MICOS complex associates with mitochondrial outer membrane proteins SAMM50, MTX1 and MTX2 (together described as components of the mitochondrial outer membrane sorting assembly machinery (SAM) complex) and DNAJC11, mitochondrial inner membrane protein TMEM11 and with HSPA9. The MICOS and SAM complexes together with DNAJC11 are part of a large protein complex spanning both membranes termed the mitochondrial intermembrane space bridging (MIB) complex. Interacts with MICOS10/MIC10, IMMT/MIC60 and APOO/MIC23/MIC26.

Its subcellular location is the mitochondrion inner membrane. It localises to the mitochondrion. Functionally, component of the MICOS complex, a large protein complex of the mitochondrial inner membrane that plays crucial roles in the maintenance of crista junctions, inner membrane architecture, and formation of contact sites to the outer membrane. Specifically binds to cardiolipin (in vitro) but not to the precursor lipid phosphatidylglycerol. Plays a crucial role in crista junction formation and mitochondrial function. In Bos taurus (Bovine), this protein is MICOS complex subunit MIC27 (APOL).